The chain runs to 928 residues: DENN domain-containing protein 2C (928 aa).

Disordered stretches follow at residues 67–105 and 245–266; these read KSKN…YDDT and QSSL…IRGR. The segment covering 85–105 has biased composition (basic and acidic residues); that stretch reads ENTKSHDQSENENKKHEYDDT. S271 is modified (phosphoserine). The segment at 428 to 456 is disordered; that stretch reads KLHSYTGKELPPTKGETSGNESDAEYLPK. In terms of domain architecture, uDENN spans 492–641; sequence ELFVVVSLQK…PFPAPGRTIT (150 aa). In terms of domain architecture, cDENN spans 663–796; the sequence is RLEHVDFKCL…LQAALMQILE (134 aa). The dDENN domain occupies 798–888; the sequence is RNEILTQEQN…QDRELRKSGV (91 aa).

Functionally, guanine nucleotide exchange factor (GEF) which may activate RAB9A and RAB9B. Promotes the exchange of GDP to GTP, converting inactive GDP-bound Rab proteins into their active GTP-bound form. In Homo sapiens (Human), this protein is DENN domain-containing protein 2C (DENND2C).